We begin with the raw amino-acid sequence, 283 residues long: Probable voltage-dependent anion-selective channel (283 aa).

It belongs to the eukaryotic mitochondrial porin family.

The protein resides in the mitochondrion outer membrane. Functionally, forms a channel through the cell membrane that allows diffusion of small hydrophilic molecules. Plays a role in maintaining mitochondrial morphology. The sequence is that of Probable voltage-dependent anion-selective channel from Caenorhabditis elegans.